Reading from the N-terminus, the 1112-residue chain is Zinc finger protein 654 (1112 aa).

The disordered stretch occupies residues 482–514 (PSSSLKKRVDQQSVEEDQSTGETDPDDASVVQP). The span at 494 to 508 (SVEEDQSTGETDPDD) shows a compositional bias: acidic residues. C2H2-type zinc fingers lie at residues 566–588 (FACV…LKNH), 738–763 (FKCP…RTVH), 779–801 (GKCK…LNRH), 807–831 (YFCL…TKSH), and 836–860 (AQCS…EAQH). 2 disordered regions span residues 885-906 (FSNE…KYST) and 997-1018 (VESQ…NLTS). Polar residues-rich tracts occupy residues 886–899 (SNEN…VSTS) and 1002–1018 (HSAL…NLTS). Phosphoserine occurs at positions 1107 and 1111.

The protein belongs to the krueppel C2H2-type zinc-finger protein family.

It localises to the nucleus. May be involved in transcriptional regulation. The polypeptide is Zinc finger protein 654 (Mus musculus (Mouse)).